A 157-amino-acid polypeptide reads, in one-letter code: ATP synthase subunit b' (157 aa).

The chain crosses the membrane as a helical span at residues 22–42 (ATLPLIAIQFLLLVAVLNSLF).

The protein belongs to the ATPase B chain family. F-type ATPases have 2 components, F(1) - the catalytic core - and F(0) - the membrane proton channel. F(1) has five subunits: alpha(3), beta(3), gamma(1), delta(1), epsilon(1). F(0) has four main subunits: a(1), b(1), b'(1) and c(10-14). The alpha and beta chains form an alternating ring which encloses part of the gamma chain. F(1) is attached to F(0) by a central stalk formed by the gamma and epsilon chains, while a peripheral stalk is formed by the delta, b and b' chains.

It localises to the cellular thylakoid membrane. In terms of biological role, f(1)F(0) ATP synthase produces ATP from ADP in the presence of a proton or sodium gradient. F-type ATPases consist of two structural domains, F(1) containing the extramembraneous catalytic core and F(0) containing the membrane proton channel, linked together by a central stalk and a peripheral stalk. During catalysis, ATP synthesis in the catalytic domain of F(1) is coupled via a rotary mechanism of the central stalk subunits to proton translocation. Its function is as follows. Component of the F(0) channel, it forms part of the peripheral stalk, linking F(1) to F(0). The b'-subunit is a diverged and duplicated form of b found in plants and photosynthetic bacteria. In Synechococcus sp. (strain JA-2-3B'a(2-13)) (Cyanobacteria bacterium Yellowstone B-Prime), this protein is ATP synthase subunit b'.